Here is a 515-residue protein sequence, read N- to C-terminus: Alpha-1B adrenergic receptor (515 aa).

Topologically, residues 1–45 are extracellular; sequence MNPDLDTGHNTSAPAQWGELKDANFTGPNQTSSNSTLPQLDVTRA. Residues Asn10, Asn24, and Asn34 are each glycosylated (N-linked (GlcNAc...) asparagine). The helical transmembrane segment at 46-70 threads the bilayer; the sequence is ISVGLVLGAFILFAIVGNILVILSV. Residues 71 to 83 are Cytoplasmic-facing; that stretch reads ACNRHLRTPTNYF. A helical transmembrane segment spans residues 84–105; sequence IVNLAIADLLLSFTVLPFSATL. The Extracellular portion of the chain corresponds to 106 to 115; sequence EVLGYWVLGR. A helical membrane pass occupies residues 116-141; it reads IFCDIWAAVDVLCCTASILSLCAISI. A disulfide bond links Cys118 and Cys195. Over 142–161 the chain is Cytoplasmic; the sequence is DRYIGVRYSLQYPTLVTRRK. The helical transmembrane segment at 162 to 184 threads the bilayer; that stretch reads AILALLSVWVLSTVISIGPLLGW. At 185–201 the chain is on the extracellular side; it reads KEPAPNDDKECGVTEEP. A helical transmembrane segment spans residues 202–224; that stretch reads FYALFSSLGSFYIPLAVILVMYC. Residues 225–295 lie on the Cytoplasmic side of the membrane; the sequence is RVYIVAKRTT…FSREKKAAKT (71 aa). Residue Thr264 is modified to Phosphothreonine. Residues 296-319 form a helical membrane-spanning segment; sequence LGIVVGMFILCWLPFFIALPLGSL. The Extracellular portion of the chain corresponds to 320-326; sequence FSTLKPP. Residues 327-351 traverse the membrane as a helical segment; sequence DAVFKVVFWLGYFNSCLNPIIYPCS. Over 352–515 the chain is Cytoplasmic; that stretch reads SKEFKRAFMR…SNMPLAPGHF (164 aa). Cys365 carries S-palmitoyl cysteine lipidation. The Nuclear localization signal signature appears at 368-378; that stretch reads RSGRRRRRRRR. Disordered regions lie at residues 392 to 428 and 473 to 515; these read GGSL…SPGY and LLGE…PGHF. Positions 410-424 are enriched in polar residues; it reads SCMSGSQRTLPSASP.

This sequence belongs to the G-protein coupled receptor 1 family. Adrenergic receptor subfamily. ADRA1B sub-subfamily. In terms of assembly, homo- and heterooligomer. Heterooligomerizes with ADRA1B homooligomers in cardiac myocytes. Interacts with CAVIN4.

It is found in the nucleus membrane. Its subcellular location is the cell membrane. The protein localises to the cytoplasm. It localises to the membrane. The protein resides in the caveola. Functionally, this alpha-adrenergic receptor mediates its action by association with G proteins that activate a phosphatidylinositol-calcium second messenger system. Its effect is mediated by G(q) and G(11) proteins. Nuclear ADRA1A-ADRA1B heterooligomers regulate phenylephrine (PE)-stimulated ERK signaling in cardiac myocytes. The polypeptide is Alpha-1B adrenergic receptor (ADRA1B) (Mesocricetus auratus (Golden hamster)).